Here is a 94-residue protein sequence, read N- to C-terminus: Small ribosomal subunit protein uS19 (94 aa).

The protein belongs to the universal ribosomal protein uS19 family.

Protein S19 forms a complex with S13 that binds strongly to the 16S ribosomal RNA. This is Small ribosomal subunit protein uS19 from Wolbachia sp. subsp. Brugia malayi (strain TRS).